Here is a 37-residue protein sequence, read N- to C-terminus: Photosystem I reaction center subunit VIII (37 aa).

A helical membrane pass occupies residues 10-30 (IFVPLVGLVFPAIAMASLSLY).

This sequence belongs to the PsaI family.

It is found in the plastid. Its subcellular location is the chloroplast thylakoid membrane. Its function is as follows. May help in the organization of the PsaL subunit. The polypeptide is Photosystem I reaction center subunit VIII (Gossypium hirsutum (Upland cotton)).